A 454-amino-acid chain; its full sequence is DNA-binding protein BIN4 (454 aa).

Disordered stretches follow at residues 24–53, 103–249, and 380–454; these read LLSL…DDGD, AGKE…DKDT, and TFES…KAKK. Residues 112–123 are compositionally biased toward basic and acidic residues; it reads DCEKLSSKHKDA. Polar residues predominate over residues 132–150; sequence LVSSDSEPSSPIKQEVTVS. The segment covering 229–249 has biased composition (basic and acidic residues); sequence TPKEENCAQEILKTEDKDKDT. A compositionally biased stretch (basic residues) spans 438–454; it reads PAKKARNSAPKKPKAKK.

As to quaternary structure, interacts with TOP6A, RHL1 and itself, but not with TOP6B. Expressed in expanding cotyledons, vascular cells, elongating root cells, developing leaf trichomes, root and apical meristems and lateral root primordia.

The protein resides in the nucleus. Its function is as follows. Component of the DNA topoisomerase VI complex. Binds to DNA. Required for chromatin organization and progression of endoreduplication cycles. The loss of BIN4 activates the ATM- and ATR-dependent DNA damage responses in postmitotic cells and induces the ectopic expression of the mitotic G2/M-specific cyclin B1;1 gene in non-dividing cells. In Arabidopsis thaliana (Mouse-ear cress), this protein is DNA-binding protein BIN4 (BIN4).